A 459-amino-acid polypeptide reads, in one-letter code: tRNA-guanine(15) transglycosylase (459 aa).

The Nucleophile role is filled by Asp90. Substrate contacts are provided by Asp125 and Gly192. Positions 275, 277, and 280 each coordinate Zn(2+).

This sequence belongs to the archaeosine tRNA-ribosyltransferase family. Zn(2+) serves as cofactor.

It catalyses the reaction guanosine(15) in tRNA + 7-cyano-7-deazaguanine = 7-cyano-7-carbaguanosine(15) in tRNA + guanine. It functions in the pathway tRNA modification; archaeosine-tRNA biosynthesis. In terms of biological role, exchanges the guanine residue with 7-cyano-7-deazaguanine (preQ0) at position 15 in the dihydrouridine loop (D-loop) of archaeal tRNAs. This Methanopyrus kandleri (strain AV19 / DSM 6324 / JCM 9639 / NBRC 100938) protein is tRNA-guanine(15) transglycosylase.